The chain runs to 1240 residues: Ubiquitin carboxyl-terminal hydrolase 36 (1240 aa).

Disordered regions lie at residues 37–56 (AKTSNGGGDGSSTSGSSTDN) and 100–144 (SNGG…GTSA). Low complexity-rich tracts occupy residues 47-56 (SSTSGSSTDN) and 101-132 (NGGAASNGNGNYNGSNKTNGKFGAGNGHDNNG). The region spanning 202-512 (TGMLNVGNTC…NAYIMFYELD (311 aa)) is the USP domain. Residue Cys211 is the Nucleophile of the active site. His471 functions as the Proton acceptor in the catalytic mechanism. Residues 637 to 705 (ANKSSCNTLN…KMFEESSESV (69 aa)) form a disordered region. The span at 639–649 (KSSCNTLNNSK) shows a compositional bias: polar residues. Residues 650-662 (QHQPQQQQQQPQH) show a composition bias toward low complexity. Over residues 668–680 (SDEEEDSDDDNDN) the composition is skewed to acidic residues. Thr715 bears the Phosphothreonine mark. Disordered stretches follow at residues 723–818 (YESA…KQKT), 831–998 (YKNK…GESL), 1076–1163 (DMSS…EYES), and 1198–1240 (RFAG…QQQS). 2 positions are modified to phosphoserine: Ser725 and Ser727. Low complexity predominate over residues 733-744 (QQQQQQQTLQQQ). A compositionally biased stretch (acidic residues) spans 759-769 (SDTDDDDDEEQ). Positions 794-815 (NSSSSKTKSASNASSANVNSSK) are enriched in low complexity. Residues 843 to 859 (DDDDDDDEDEDEDEDEA) show a composition bias toward acidic residues. Positions 869–879 (TKSSSSSSSTS) are enriched in low complexity. The span at 880-890 (LTNGWQQSQNG) shows a compositional bias: polar residues. Ser895 is subject to Phosphoserine. Thr898 carries the post-translational modification Phosphothreonine. The residue at position 901 (Ser901) is a Phosphoserine. Positions 918 to 941 (DEDDDENVDGVADADDDDDNDEVA) are enriched in acidic residues. Polar residues predominate over residues 976–988 (LNGSSKSQQTTPR). The segment covering 1076-1103 (DMSSSSSSSSSTNSSSNSSSRSNGNSSN) has biased composition (low complexity). Basic and acidic residues predominate over residues 1111-1120 (AEAREQRKRD). Low complexity predominate over residues 1231-1240 (QSSGQQQQQS).

The protein belongs to the peptidase C19 family. In terms of assembly, interacts with atms/PAF1, but not with CycT.

The protein localises to the nucleus. It is found in the nucleolus. It carries out the reaction Thiol-dependent hydrolysis of ester, thioester, amide, peptide and isopeptide bonds formed by the C-terminal Gly of ubiquitin (a 76-residue protein attached to proteins as an intracellular targeting signal).. Required for maintaining multiple types of adult stem cells, including male and female germline, epithelial follicle cell and intestinal stem cells. May function as a transcriptional repressor by continually deubiquiting histone H2B at the promoters of genes critical for cellular differentiation, thereby preventing histone H3 'Lys-4' trimethylation (H3K4). Controls selective autophagy activation by ubiquitinated proteins. In Drosophila grimshawi (Hawaiian fruit fly), this protein is Ubiquitin carboxyl-terminal hydrolase 36 (Usp36).